Consider the following 399-residue polypeptide: MTRNIRVEELTQRPVEKQKIEVVERKGLGHPDSVADGIAEEISRALCKEYIERFGRVLHHNTDKIQIVAGRSRPAFGGGEVIQPQYILLTGRATRVCGDVEVPVDAIALRTARNHLKRALRNLDLDTHVIIDCKIGTGSADLCDIFDRDASTVPSANDTSYGVGYAPLSETERIVYSTEQELLSLRSRIPAIGEDIKVMGLREDDTIYLTIACAMVDRYIDDLDHYVETKKEIVEEISAKAQSMTRRRVDVQMNVGDNIATGSVYITVTGTSAEMGDDGAVGRGNRANGLITPNRPMSLEATSGKNPINHVGKIYNLLSNLIAKEIAEEVDGVEEVYVKILSQIGKPISQPHIASVQLVLKEGVRLSSAHARAREITDRWLEDIPRVQQMIFHGELQTY.

136 to 141 (GTGSAD) is an ATP binding site.

The protein belongs to the AdoMet synthase 2 family. Requires Mg(2+) as cofactor.

It carries out the reaction L-methionine + ATP + H2O = S-adenosyl-L-methionine + phosphate + diphosphate. It participates in amino-acid biosynthesis; S-adenosyl-L-methionine biosynthesis; S-adenosyl-L-methionine from L-methionine: step 1/1. Its function is as follows. Catalyzes the formation of S-adenosylmethionine from methionine and ATP. This is S-adenosylmethionine synthase from Methanothrix thermoacetophila (strain DSM 6194 / JCM 14653 / NBRC 101360 / PT) (Methanosaeta thermophila).